A 315-amino-acid chain; its full sequence is Ribosomal RNA small subunit methyltransferase H (315 aa).

Residues 37-39 (GGH), D57, F83, D105, and Q112 contribute to the S-adenosyl-L-methionine site.

It belongs to the methyltransferase superfamily. RsmH family.

The protein resides in the cytoplasm. The catalysed reaction is cytidine(1402) in 16S rRNA + S-adenosyl-L-methionine = N(4)-methylcytidine(1402) in 16S rRNA + S-adenosyl-L-homocysteine + H(+). Specifically methylates the N4 position of cytidine in position 1402 (C1402) of 16S rRNA. This is Ribosomal RNA small subunit methyltransferase H from Pseudomonas entomophila (strain L48).